Reading from the N-terminus, the 803-residue chain is Pesticidal crystal protein Cry13Aa (803 aa).

This sequence belongs to the delta endotoxin family.

Functionally, endotoxin with nematicidal activity. The chain is Pesticidal crystal protein Cry13Aa (cry13Aa) from Bacillus thuringiensis.